The following is a 257-amino-acid chain: uncharacterized protein (257 aa).

Positions 74-83 (LKDDLTRDNS) are enriched in basic and acidic residues. 2 disordered regions span residues 74 to 115 (LKDD…TQKR) and 209 to 257 (PYLN…YDSF). A compositionally biased stretch (polar residues) spans 100–113 (SFQNMNSSMPSSTQ). The span at 216–236 (SEDDTDSSIVEVETDYSEEEK) shows a compositional bias: acidic residues.

Belongs to the asfivirus DP238L family.

This is an uncharacterized protein from Ornithodoros (relapsing fever ticks).